The chain runs to 446 residues: Saccharopine dehydrogenase [NADP(+), L-glutamate-forming] (446 aa).

NADP(+) is bound by residues 10–13 (SGFV), 33–35 (CRT), 54–55 (DV), Ile-75, 97–98 (SS), 124–126 (LDP), and Ser-174. Residues 98-99 (SY) and Asp-125 contribute to the L-saccharopine site. Residues Arg-223 and 244–246 (TLR) each bind L-saccharopine.

Belongs to the saccharopine dehydrogenase family. In terms of assembly, interacts with TRM112.

It catalyses the reaction L-saccharopine + NADP(+) + H2O = (S)-2-amino-6-oxohexanoate + L-glutamate + NADPH + H(+). It participates in amino-acid biosynthesis; L-lysine biosynthesis via AAA pathway; L-lysine from L-alpha-aminoadipate (fungal route): step 2/3. This Saccharomyces cerevisiae (strain ATCC 204508 / S288c) (Baker's yeast) protein is Saccharopine dehydrogenase [NADP(+), L-glutamate-forming] (LYS9).